We begin with the raw amino-acid sequence, 181 residues long: Large ribosomal subunit protein uL10 (181 aa).

Belongs to the universal ribosomal protein uL10 family. As to quaternary structure, part of the ribosomal stalk of the 50S ribosomal subunit. The N-terminus interacts with L11 and the large rRNA to form the base of the stalk. The C-terminus forms an elongated spine to which L12 dimers bind in a sequential fashion forming a multimeric L10(L12)X complex.

Its function is as follows. Forms part of the ribosomal stalk, playing a central role in the interaction of the ribosome with GTP-bound translation factors. The sequence is that of Large ribosomal subunit protein uL10 from Protochlamydia amoebophila (strain UWE25).